The sequence spans 312 residues: tRNA dimethylallyltransferase (312 aa).

10-17 (GPTAVGKT) lines the ATP pocket. A substrate-binding site is contributed by 12–17 (TAVGKT). The interaction with substrate tRNA stretch occupies residues 35-38 (DSMQ).

It belongs to the IPP transferase family. In terms of assembly, monomer. Mg(2+) serves as cofactor.

The catalysed reaction is adenosine(37) in tRNA + dimethylallyl diphosphate = N(6)-dimethylallyladenosine(37) in tRNA + diphosphate. In terms of biological role, catalyzes the transfer of a dimethylallyl group onto the adenine at position 37 in tRNAs that read codons beginning with uridine, leading to the formation of N6-(dimethylallyl)adenosine (i(6)A). The protein is tRNA dimethylallyltransferase of Alkaliphilus metalliredigens (strain QYMF).